Consider the following 369-residue polypeptide: Dual specificity protein phosphatase 1-B (369 aa).

The Rhodanese domain occupies 21–138 (RAHKCLILDC…FSSQCPEFCN (118 aa)). A Phosphothreonine; by MAPK1 modification is found at threonine 168. The Tyrosine-protein phosphatase domain maps to 175 to 316 (GPVEILPFLY…LLQFESQVLA (142 aa)). Residue cysteine 260 is the Phosphocysteine intermediate of the active site.

Belongs to the protein-tyrosine phosphatase family. Non-receptor class dual specificity subfamily. Post-translationally, phosphorylated by MAPK1/ERK2 at Thr-168 and at one or more serine residues in a progesterone-dependent manner. Phosphorylation reduces its rate of degradation but does not seem to affect phosphatase activity.

It localises to the nucleus. The catalysed reaction is O-phospho-L-seryl-[protein] + H2O = L-seryl-[protein] + phosphate. It catalyses the reaction O-phospho-L-threonyl-[protein] + H2O = L-threonyl-[protein] + phosphate. It carries out the reaction O-phospho-L-tyrosyl-[protein] + H2O = L-tyrosyl-[protein] + phosphate. Dual specificity phosphatase that dephosphorylates MAP kinase MAPK1/ERK2 on both 'Thr-188' and 'Tyr-190', regulating its activity during the meiotic cell cycle. The sequence is that of Dual specificity protein phosphatase 1-B from Xenopus laevis (African clawed frog).